Consider the following 59-residue polypeptide: Photosystem II reaction center protein K (59 aa).

A propeptide spanning residues 1-22 (MLNIFSLICLSSALHSSSFFFA) is cleaved from the precursor. A helical membrane pass occupies residues 38 to 58 (MPVIPVLFFLLALVWQAAVSF).

Belongs to the PsbK family. PSII is composed of 1 copy each of membrane proteins PsbA, PsbB, PsbC, PsbD, PsbE, PsbF, PsbH, PsbI, PsbJ, PsbK, PsbL, PsbM, PsbT, PsbX, PsbY, PsbZ, Psb30/Ycf12, at least 3 peripheral proteins of the oxygen-evolving complex and a large number of cofactors. It forms dimeric complexes.

Its subcellular location is the plastid. It is found in the chloroplast thylakoid membrane. Functionally, one of the components of the core complex of photosystem II (PSII). PSII is a light-driven water:plastoquinone oxidoreductase that uses light energy to abstract electrons from H(2)O, generating O(2) and a proton gradient subsequently used for ATP formation. It consists of a core antenna complex that captures photons, and an electron transfer chain that converts photonic excitation into a charge separation. In Piper cenocladum (Ant piper), this protein is Photosystem II reaction center protein K.